The following is a 261-amino-acid chain: MKGMEEVVIDAKDMHYRELNEKIHEILRENPDIKKIVLKNVLGQRFIADGIQKKDLTIEIYGIPGGDLGMFMSGPTIIVHGNAEFAPGNTMDDGTIVIYGSSGDVTAHSMRGGKVFVRGDVGYRSGIHMKAYKDKVPVLVIGGRAKDFLGEYMAGGIIIVLNIDEKGNDLGKVKGRMIGTGIHGGAIYIRGEIDKDQLGVAADIKEFTEEDLEKIKPYIEEFCKWFNLPEDVKNKLLNSKWTKIAPISKRPFGKLYTPDLM.

The protein belongs to the FwdC/FmdC family.

This is an uncharacterized protein from Methanocaldococcus jannaschii (strain ATCC 43067 / DSM 2661 / JAL-1 / JCM 10045 / NBRC 100440) (Methanococcus jannaschii).